A 122-amino-acid polypeptide reads, in one-letter code: Large ribosomal subunit protein uL18 (122 aa).

Belongs to the universal ribosomal protein uL18 family. As to quaternary structure, part of the 50S ribosomal subunit; part of the 5S rRNA/L5/L18/L25 subcomplex. Contacts the 5S and 23S rRNAs.

Its function is as follows. This is one of the proteins that bind and probably mediate the attachment of the 5S RNA into the large ribosomal subunit, where it forms part of the central protuberance. The polypeptide is Large ribosomal subunit protein uL18 (Buchnera aphidicola subsp. Acyrthosiphon pisum (strain 5A)).